A 354-amino-acid polypeptide reads, in one-letter code: Protein RecA (354 aa).

67–74 (GPESSGKT) provides a ligand contact to ATP.

This sequence belongs to the RecA family.

Its subcellular location is the cytoplasm. Functionally, can catalyze the hydrolysis of ATP in the presence of single-stranded DNA, the ATP-dependent uptake of single-stranded DNA by duplex DNA, and the ATP-dependent hybridization of homologous single-stranded DNAs. It interacts with LexA causing its activation and leading to its autocatalytic cleavage. This chain is Protein RecA, found in Haemophilus influenzae (strain 86-028NP).